The sequence spans 21 residues: M-lycotoxin-Ls4a (21 aa).

At L21 the chain carries Leucine amide.

As to expression, expressed by the venom gland.

Its subcellular location is the secreted. Its function is as follows. May inhibit growth of bacteria. The chain is M-lycotoxin-Ls4a from Lycosa singoriensis (Wolf spider).